We begin with the raw amino-acid sequence, 80 residues long: U20-ctenitoxin-Pn1a (80 aa).

7 disulfide bridges follow: Cys-3-Cys-20, Cys-10-Cys-26, Cys-17-Cys-52, Cys-19-Cys-40, Cys-28-Cys-38, Cys-58-Cys-71, and Cys-75-Cys-80.

As to expression, expressed by the venom gland.

The protein resides in the secreted. In terms of biological role, omega-agatoxin are antagonists of voltage-gated calcium channels (Cav). Induces rapid general flaccid paralysis followed by death when injected into the cerebral ventricle of mice at dose levels of 3 ug per mouse. In Phoneutria nigriventer (Brazilian armed spider), this protein is U20-ctenitoxin-Pn1a.